The chain runs to 107 residues: Replication initiation control protein YabA (107 aa).

Zn(2+)-binding residues include His81, Cys83, Cys97, and Cys100.

The protein belongs to the YabA family. Homotetramer. Interacts with both DnaA and DnaN, acting as a bridge between these two proteins. Zn(2+) is required as a cofactor.

The protein resides in the cytoplasm. It is found in the nucleoid. Involved in control of chromosome replication initiation. Inhibits the cooperative binding of DnaA to the oriC region, thus negatively regulating initiation of chromosome replication. Inhibits the ability of DnaA-ATP to form a helix on DNA; does not disassemble preformed DnaA-DNA helices. Decreases the residence time of DnaA on the chromosome at its binding sites (oriC, replication forks and promoter-binding sites). Tethers DnaA to the replication machinery via the DNA polymerase beta sliding clamp subunit (dnaN). Associates with oriC and other DnaA targets on the chromosome in a DnaA-dependent manner. In Streptococcus pyogenes serotype M1, this protein is Replication initiation control protein YabA.